The sequence spans 108 residues: Competence protein ComGC (108 aa).

Positions 1–13 are cleaved as a signal peptide; the sequence is MKKMMTFLKKAKV. A may be involved in polymerization of ComGC region spans residues 14-39; it reads KAFTLVEMLVVLLIISVLFLLFVPNL. Residue phenylalanine 16 is modified to N-methylphenylalanine. A helical transmembrane segment spans residues 16 to 36; the sequence is FTLVEMLVVLLIISVLFLLFV.

It belongs to the ComGC family. In terms of assembly, the transformation pili are flexible filaments, consisting mainly of the major pilin ComGC and smaller amounts of the minor pilins, including at least ComGD, ComGF and ComGG, and perhaps ComGE. Homodimer. Forms higher-order multimers. Interacts with ComGG; the interaction is probably direct. In terms of processing, undergoes proteolytic cleavage.

The protein resides in the cell membrane. Its subcellular location is the cell surface. It localises to the fimbrium. The protein localises to the secreted. Functionally, major component of the type IV-like pilus (T4P) that plays a role in transformation. Transformation pili are dynamically extended and retracted, perhaps thereby promoting DNA uptake and transformation. Required for transformation. Required for DNA binding. The chain is Competence protein ComGC from Streptococcus pneumoniae serotype 4 (strain ATCC BAA-334 / TIGR4).